Here is a 217-residue protein sequence, read N- to C-terminus: Monomethylamine corrinoid protein 2 (217 aa).

In terms of domain architecture, B12-binding N-terminal spans 1-91 (MTNTEIFEKL…ELEKSKVEGE (91 aa)). The 125-residue stretch at 93 to 217 (TGLAITFVAE…AAKVALNIMK (125 aa)) folds into the B12-binding domain. His-106 contributes to the methylcob(III)alamin binding site.

Belongs to the methylamine corrinoid protein family. As to quaternary structure, can form a complex with MtmB.

It participates in one-carbon metabolism; methanogenesis from methylamine. In terms of biological role, acts as a methyl group carrier between MtmB and MtbA. The polypeptide is Monomethylamine corrinoid protein 2 (mtmC2) (Methanosarcina acetivorans (strain ATCC 35395 / DSM 2834 / JCM 12185 / C2A)).